The following is a 165-amino-acid chain: Ribosome maturation factor RimM (165 aa).

Positions 90 to 161 (EDEYFIVDLV…LITIRPSGEW (72 aa)) constitute a PRC barrel domain.

It belongs to the RimM family. As to quaternary structure, binds ribosomal protein uS19.

The protein resides in the cytoplasm. In terms of biological role, an accessory protein needed during the final step in the assembly of 30S ribosomal subunit, possibly for assembly of the head region. Essential for efficient processing of 16S rRNA. May be needed both before and after RbfA during the maturation of 16S rRNA. It has affinity for free ribosomal 30S subunits but not for 70S ribosomes. The sequence is that of Ribosome maturation factor RimM from Clostridium perfringens (strain ATCC 13124 / DSM 756 / JCM 1290 / NCIMB 6125 / NCTC 8237 / Type A).